Reading from the N-terminus, the 328-residue chain is D-cysteine desulfhydrase (328 aa).

Lys51 bears the N6-(pyridoxal phosphate)lysine mark.

The protein belongs to the ACC deaminase/D-cysteine desulfhydrase family. Homodimer. Requires pyridoxal 5'-phosphate as cofactor.

The catalysed reaction is D-cysteine + H2O = hydrogen sulfide + pyruvate + NH4(+) + H(+). Catalyzes the alpha,beta-elimination reaction of D-cysteine and of several D-cysteine derivatives. It could be a defense mechanism against D-cysteine. In Escherichia coli (strain UTI89 / UPEC), this protein is D-cysteine desulfhydrase.